Reading from the N-terminus, the 134-residue chain is Agouti-related protein (134 aa).

The first 20 residues, 1 to 20, serve as a signal peptide directing secretion; it reads MLTAVLLSCALLLAMPPLQG. Positions 21-84 are excised as a propeptide; it reads AQMGPAPLEG…VLDPEGRKPR (64 aa). Disulfide bonds link C89–C104, C96–C110, C103–C121, C107–C131, and C112–C119. Residues 89–131 enclose the Agouti domain; it reads CVRLHESCLGHQVPCCDPCATCYCRFFNAFCYCRKLGTTTNPC. Residues 113–115 form an interaction with melanocortin receptors region; the sequence is RFF.

As to quaternary structure, interacts with melanocortin receptors MC3R, MC4R and MC5R.

The protein localises to the secreted. It is found in the golgi apparatus lumen. Functionally, plays a role in weight homeostasis. Involved in the control of feeding behavior through the central melanocortin system. Acts as alpha melanocyte-stimulating hormone antagonist by inhibiting cAMP production mediated by stimulation of melanocortin receptors within the hypothalamus and adrenal gland. Has very low activity with MC5R. Is an inverse agonist for MC3R and MC4R being able to suppress their constitutive activity. It promotes MC3R and MC4R endocytosis in an arrestin-dependent manner. This Bos taurus (Bovine) protein is Agouti-related protein (AGRP).